A 979-amino-acid polypeptide reads, in one-letter code: Putative cellulose synthase-like protein D6 (979 aa).

The segment at 1 to 24 is disordered; sequence MMDGESPLRHPRISHVSNSGSDFG. The span at 14 to 24 shows a compositional bias: low complexity; sequence SHVSNSGSDFG. A run of 2 helical transmembrane segments spans residues 116–136 and 147–167; these read IIIALYRILIVVRVVSLALFL and ALWLWLLSVICELWFAFSWLL. Catalysis depends on residues Asp247 and Asp683. 6 helical membrane-spanning segments follow: residues 765-785, 788-808, 837-857, 882-902, 913-933, and 946-966; these read IFILTYCFLPPLSLFSGHFVV, LTGSFLIYLLIITLSLCGLAV, LVAVLQGILKVIAGVEISFTL, ALMIPPLTIIILNIVAILFAV, WSNLLGGTFFASWVLLHMYPF, and TVVYVWSGLIAICLSLLYITI.

This sequence belongs to the glycosyltransferase 2 family. Plant cellulose synthase-like D subfamily.

It is found in the golgi apparatus membrane. Thought to be a Golgi-localized beta-glycan synthase that polymerize the backbones of noncellulosic polysaccharides (hemicelluloses) of plant cell wall. This chain is Putative cellulose synthase-like protein D6 (CSLD6), found in Arabidopsis thaliana (Mouse-ear cress).